Consider the following 86-residue polypeptide: Mu-theraphotoxin-Cg2a 2 (86 aa).

Residues 1–21 form the signal peptide; sequence MKVSVVITLAVLGVMFVWASA. The propeptide occupies 22-50; it reads AELEERGSDQRDSPAWIKSMERIFQSEER. Intrachain disulfides connect C52–C66, C59–C71, and C65–C78. F84 bears the Phenylalanine amide mark.

Belongs to the neurotoxin 10 (Hwtx-1) family. 37 (Jztx-31) subfamily. As to expression, expressed by the venom gland.

It localises to the secreted. Its function is as follows. Inhibits both peak current and fast inactivation of voltage-gated sodium channels (Nav) channels. Inhibits the inactivation of Nav on DRG neurons (EC(50)=1.77 uM) and peak current of cardiac myocytes (IC(50)=0.90 uM). In Chilobrachys guangxiensis (Chinese earth tiger tarantula), this protein is Mu-theraphotoxin-Cg2a 2.